A 434-amino-acid chain; its full sequence is Enolase (434 aa).

2 residues coordinate substrate: histidine 158 and glutamate 167. Glutamate 210 serves as the catalytic Proton donor. 3 residues coordinate Mg(2+): aspartate 245, glutamate 294, and aspartate 319. Residues glutamate 294 and aspartate 319 each coordinate substrate. Lysine 344 serves as the catalytic Proton acceptor. Substrate-binding positions include 371–374 and lysine 395; that span reads SHRS.

It belongs to the enolase family. As to quaternary structure, homodimer. It depends on Mg(2+) as a cofactor.

It is found in the cytoplasm. It catalyses the reaction (2R)-2-phosphoglycerate = phosphoenolpyruvate + H2O. Its pathway is carbohydrate degradation; glycolysis; pyruvate from D-glyceraldehyde 3-phosphate: step 4/5. This chain is Enolase, found in Caenorhabditis elegans.